The primary structure comprises 2325 residues: MTSNQSISTTELLQFLTDIETNIDDHETDFRKLLLYLLRFTNEKLIVIAQEENKTPTELQLLSKLIDTIELVLSKKTPLLSTLLTIEDVNIIHTTGSGSLVYEVPLHEWCISFALSHIPNFVSHTAGLNQLKRLVFLIVNLVSTQLHSFKVIKSTRIHLLKTLDDNLNFCLQNLLSANTFLFKSKLTTAVNLFSIVHDYDISQKLSLNLNNYQLKFESCSRKIWFILNEISLVSELDNLNLLDCLKSVFILDQSSALVLNVSVGWNQIGFLLSCIVEYLQQDFRTLDSNTNNFEFVNLNRSISLSLLNVYIVCFDKDLLENFMSFSNIKGILSKLIYDDSIPSVIRKTLNIVQYTYQLMSNPDGDDIKLYSTSVYNDYVWTPFVDSELESLRARLLDLQGNHEDSRKEELLSFSIDETHKLAKSTNSLNYTDEKAWIRTVKKLIGIDKNVLEDETTLYTLVTALSHYPCILKGDYDYTINECTKCGFGPLTKNNYSSIDPNRFPLNYSTEATTLQDIIQQFLIPKLETQQDPLLCCNTLLLIFNFYASFSPMADMQDHNILDFLLRLLATNDNRDVRMLVARILPLYLIQSKDDKLLDETFKYIFQKVTSIDFSSQHRLHFGESTIRAVVELATVSTGERLCAIYFKLVDWLGEQNEQHSNYVYCGILNLASAKSLPPHKLLSPYLPSVAEIIIKKPQVFERIIKVSMVTKNYFLNRTKEYTVPRILEYYKDPTLLTQIANAAGLEVGKLLANCLPRILATYLTKESVNERYIMKVLSSVCPDYKMIHTEELFTRIGDITWYILLEIQMDEFGNIRNLANITRALECVCKNVSLRKNGSELTKNNSINDLIEDQVLLLVQKFSDVTHSSRGAKPYLELKNSFYAIEFLIKGHIDAITSALGQLSTCLQATLEEPNFHVLSLRCWNELIKKVPPSHLISLIDIIISIILQKFESFGSEAKSIAIEILRKIYEEIKDKYNRYSLYFLSLPFLSYMEDYQMVKEFRNMKSPSRAMIFSEFTRRLQTSNMYVVKHALFDLSNYFEKYQINCQKDLFKDPGLTPAITSLVRTILDTAAKFKNKDTTVSTACAKALAIIGALDSNKFQFKTVKSLIIISSDFEDIEENSTFLVDLIENHLLKIFWASNDPHKQLFAAYVMQSFLAVMGLDERVLNTKDNRVWNKFTDVAKSTLTPFLKSKYAAPKPKLDNLKFPFFKLGMKYETWLVDVTLFLLKRASIDNGKGNQKAKTRKLIFQSYAVLIQREHDIPLCEHLLRYVALSHVINEGVPEDLHKEFLHILKMDSKSTSPDRAEQLKLCYQTIFSVLDYFNQWVSNMRVVTSNSGSELTSSDIRHKMDAVAKFSSFPQDLLTTRSAECDAYERTIMYLENCYRDSQSEKSFKLSNLNGAATLQDMYAHIDDYDALNGTLKMFSTNNLNEKLTTFQYSDSWSLAHESFEALGSTKNSVSNNTKLLQSLNEHGLYNEVLSTLSARTDSNDLKSIPLDWSLMGLHAAVYKGDSKQLEKWLQVINSIGKPHDMETMINYELAKALSFLFQSRIDMFKGSMDKLYNIIGCSLVPSVSSNFTRNITLMNQLHAIYDVSLIVLSKDSEDTLDLRIGNVDQDFDTQRNILTLHNVANTVMKNPAMISKNLLRESSLARKYNRLDISTRSIVQAMSLEDDQANIEFAELQWAQGKQSEAIKCLFDILKDNKFHDDKSKAKVQLQYANWLDESNHLSAHQIITEYNKAFHLNMVDEKCNFDIGKYYNKLMESSNDESGEYEHLTVRNYIRAVSVGTTYIFEALPKVLTIWLDFADKSNKSNAAENRLKQIIDDLYNAIANVPNYSWYTVLTQILSRIVHEHEPSFKVLKRIVQNVTLEYPKHCVWYIFSHARSSDKVRKRRVRELLNQVCTQDGNDTLPKSTMAAGNLFAKLIKIAELKIPKTNRKRQMSLLQDFEVDLSEPIDDLVIPIQSNLQIQIPSHLNSKHKGFSRSSSISFDGFDDNVNIFFSLQMPRQLTVRGSDGNAYRLMVKSDDTRKDAKVVEFTTMVNRILSTSTEARKRGLQIANYSVVPLSDHFGIIEFVMNVQTMKGVISEQRKRQGIPINERKVFMHIDSLQKAKKKDSKQLDKLVAGFRAIMDRCPPVLHTWFVEQFSDPSAWYMARNAFTRSSAVMSMVGYIMGLGDRHCENILIFKNTGAVLHIDFDCLFEKGTTLPTPEIVPFRLTQNMVDAMGITGVDGIYRITCEVTGTLLRENEQILMNILETLIYDPLIDWRNHNPREDLSKVRKKIRGLINEDEGLPMNIHGQVDVLIQEATSLERLSQMYAGWAAYM.

One can recognise an FAT domain in the interval 1363–1886 (LLTTRSAECD…VWYIFSHARS (524 aa)). The PI3K/PI4K catalytic domain occupies 1993–2309 (FDDNVNIFFS…QVDVLIQEAT (317 aa)). The segment at 1999-2005 (IFFSLQM) is G-loop. Residues 2174-2182 (GLGDRHCEN) form a catalytic loop region. Positions 2194–2218 (HIDFDCLFEKGTTLPTPEIVPFRLT) are activation loop. Positions 2293–2325 (LPMNIHGQVDVLIQEATSLERLSQMYAGWAAYM) constitute an FATC domain.

This sequence belongs to the PI3/PI4-kinase family. ATM subfamily.

The protein resides in the nucleus. It carries out the reaction L-seryl-[protein] + ATP = O-phospho-L-seryl-[protein] + ADP + H(+). The enzyme catalyses L-threonyl-[protein] + ATP = O-phospho-L-threonyl-[protein] + ADP + H(+). In terms of biological role, serine/threonine protein kinase which activates checkpoint signaling upon genotoxic stresses such as ionizing radiation (IR), ultraviolet light (UV), or DNA replication stalling, thereby acting as a DNA damage sensor. Recognizes the substrate consensus sequence [ST]-Q. Recruited to DNA lesions in order to initiate the DNA repair by homologous recombination. Phosphorylates histone H2A to form H2AS128ph (gamma-H2A) at sites of DNA damage, also involved in the regulation of DNA damage response mechanism. Required for cell growth and meiotic recombination. In Candida albicans (strain SC5314 / ATCC MYA-2876) (Yeast), this protein is Serine/threonine-protein kinase MEC1 (MEC1).